We begin with the raw amino-acid sequence, 211 residues long: Interleukin-6 (211 aa).

The first 24 residues, 1–24 (MKFLSARDFQPVAFLGLMLLTATA), serve as a signal peptide directing secretion. A disulfide bridge links cysteine 70 with cysteine 76. Serine 79 bears the Phosphoserine mark. A disulfide bond links cysteine 99 and cysteine 109.

Belongs to the IL-6 superfamily. In terms of assembly, component of a hexamer of two molecules each of IL6, IL6R and IL6ST; first binds to IL6R to associate with the signaling subunit IL6ST. Interacts with IL6R (via the N-terminal ectodomain); this interaction may be affected by IL6R-binding with SORL1, hence decreasing IL6 cis signaling. Interacts with SORL1 (via the N-terminal ectodomain); this interaction leads to IL6 internalization and lysosomal degradation. May form a trimeric complex with the soluble SORL1 ectodomain and soluble IL6R receptor; this interaction might stabilize circulating IL6, hence promoting IL6 trans signaling.

It localises to the secreted. In terms of biological role, cytokine with a wide variety of biological functions in immunity, tissue regeneration, and metabolism. Binds to IL6R, then the complex associates to the signaling subunit IL6ST/gp130 to trigger the intracellular IL6-signaling pathway. The interaction with the membrane-bound IL6R and IL6ST stimulates 'classic signaling', whereas the binding of IL6 and soluble IL6R to IL6ST stimulates 'trans-signaling'. Alternatively, 'cluster signaling' occurs when membrane-bound IL6:IL6R complexes on transmitter cells activate IL6ST receptors on neighboring receiver cells. Functionally, IL6 is a potent inducer of the acute phase response. Rapid production of IL6 contributes to host defense during infection and tissue injury, but excessive IL6 synthesis is involved in disease pathology. In the innate immune response, is synthesized by myeloid cells, such as macrophages and dendritic cells, upon recognition of pathogens through toll-like receptors (TLRs) at the site of infection or tissue injury. In the adaptive immune response, is required for the differentiation of B-cells into immunoglolin-secreting cells. Plays a major role in the differentiation of CD4(+) T cell subsets. Essential factor for the development of T follicular helper (Tfh) cells that are required for the induction of germinal-center formation. Together with IL21, controls the early generation of Tfh cells and are critical for an effective antibody response to acute viral infection. Required to drive naive CD4(+) T cells to the Th17 lineage, through 'cluster signaling' by dendritic cells. Also required for proliferation of myeloma cells and the survival of plasmablast cells. Its function is as follows. Acts as an essential factor in bone homeostasis and on vessels directly or indirectly by induction of VEGF, resulting in increased angiogenesis activity and vascular permeability. Induces, through 'trans-signaling' and synergistically with IL1B and TNF, the production of VEGF. Involved in metabolic controls, is discharged into the bloodstream after muscle contraction increasing lipolysis and improving insulin resistance. 'Trans-signaling' in central nervous system regulates energy and glucose homeostasis. Mediates, through GLP-1, crosstalk between insulin-sensitive tissues, intestinal L cells and pancreatic islets to adapt to changes in insulin demand. Also acts as a myokine. Plays a protective role during liver injury, being required for maintenance of tissue regeneration. Also has a pivotal role in iron metabolism by regulating HAMP/hepcidin expression upon inflammation or bacterial infection. Through activation of IL6ST-YAP-NOTCH pathway, induces inflammation-induced epithelial regeneration. The chain is Interleukin-6 from Rattus norvegicus (Rat).